The chain runs to 262 residues: 3-methyl-2-oxobutanoate hydroxymethyltransferase (262 aa).

The Mg(2+) site is built by Asp31 and Asp70. 3-methyl-2-oxobutanoate is bound by residues 31–32, Asp70, and Lys99; that span reads DS. Residue Glu101 coordinates Mg(2+). Glu168 (proton acceptor) is an active-site residue.

It belongs to the PanB family. As to quaternary structure, homodecamer; pentamer of dimers. Requires Mg(2+) as cofactor.

It localises to the cytoplasm. The enzyme catalyses 3-methyl-2-oxobutanoate + (6R)-5,10-methylene-5,6,7,8-tetrahydrofolate + H2O = 2-dehydropantoate + (6S)-5,6,7,8-tetrahydrofolate. It participates in cofactor biosynthesis; coenzyme A biosynthesis. Functionally, catalyzes the reversible reaction in which hydroxymethyl group from 5,10-methylenetetrahydrofolate is transferred onto alpha-ketoisovalerate to form ketopantoate. The polypeptide is 3-methyl-2-oxobutanoate hydroxymethyltransferase (Cenarchaeum symbiosum (strain A)).